We begin with the raw amino-acid sequence, 244 residues long: Nuclear protein UL4 homolog (244 aa).

The segment at arginine 193–phenylalanine 227 is disordered. Over residues histidine 205–serine 220 the composition is skewed to polar residues.

It belongs to the alphaherpesvirinae HHV-1 UL4 family.

The protein localises to the host nucleus. The sequence is that of Nuclear protein UL4 homolog from Varicella-zoster virus (strain Dumas) (HHV-3).